Reading from the N-terminus, the 29-residue chain is Cuticle protein 36 (29 aa).

Functionally, component of the cuticle of migratory locust which contains more than 100 different structural proteins. This chain is Cuticle protein 36, found in Locusta migratoria (Migratory locust).